Consider the following 515-residue polypeptide: NAD(P)H-quinone oxidoreductase subunit 2 (515 aa).

The next 14 helical transmembrane spans lie at 14 to 34 (TILP…ADLI), 42 to 62 (WTPY…IPLW), 79 to 99 (LSLF…LMSI), 109 to 128 (LGEF…FIAG), 132 to 151 (LVFI…LLTG), 167 to 187 (LLIG…LYGL), 206 to 226 (LGLV…ISAV), 240 to 260 (PTPV…ALAI), 274 to 294 (WQLI…VVAL), 302 to 322 (MLAY…VVGT), 330 to 350 (LFYL…VILF), 374 to 394 (LGLS…GFFG), 396 to 416 (IYLF…LGLL), and 462 to 482 (VGLV…NPLF).

It belongs to the complex I subunit 2 family. As to quaternary structure, NDH-1 can be composed of about 15 different subunits; different subcomplexes with different compositions have been identified which probably have different functions.

Its subcellular location is the cellular thylakoid membrane. It carries out the reaction a plastoquinone + NADH + (n+1) H(+)(in) = a plastoquinol + NAD(+) + n H(+)(out). It catalyses the reaction a plastoquinone + NADPH + (n+1) H(+)(in) = a plastoquinol + NADP(+) + n H(+)(out). Its function is as follows. NDH-1 shuttles electrons from an unknown electron donor, via FMN and iron-sulfur (Fe-S) centers, to quinones in the respiratory and/or the photosynthetic chain. The immediate electron acceptor for the enzyme in this species is believed to be plastoquinone. Couples the redox reaction to proton translocation, and thus conserves the redox energy in a proton gradient. Cyanobacterial NDH-1 also plays a role in inorganic carbon-concentration. This is NAD(P)H-quinone oxidoreductase subunit 2 from Thermosynechococcus vestitus (strain NIES-2133 / IAM M-273 / BP-1).